The sequence spans 205 residues: High frequency lysogenization protein HflD homolog (205 aa).

Belongs to the HflD family.

It is found in the cytoplasm. It localises to the cell inner membrane. This Shewanella sp. (strain MR-4) protein is High frequency lysogenization protein HflD homolog.